The sequence spans 156 residues: 6,7-dimethyl-8-ribityllumazine synthase (156 aa).

5-amino-6-(D-ribitylamino)uracil contacts are provided by residues Phe23, 57-59 (AFE), and 81-83 (AVI). Position 86–87 (86–87 (ST)) interacts with (2S)-2-hydroxy-3-oxobutyl phosphate. The Proton donor role is filled by His89. Phe114 serves as a coordination point for 5-amino-6-(D-ribitylamino)uracil. Position 128 (Arg128) interacts with (2S)-2-hydroxy-3-oxobutyl phosphate.

It belongs to the DMRL synthase family.

The enzyme catalyses (2S)-2-hydroxy-3-oxobutyl phosphate + 5-amino-6-(D-ribitylamino)uracil = 6,7-dimethyl-8-(1-D-ribityl)lumazine + phosphate + 2 H2O + H(+). It participates in cofactor biosynthesis; riboflavin biosynthesis; riboflavin from 2-hydroxy-3-oxobutyl phosphate and 5-amino-6-(D-ribitylamino)uracil: step 1/2. Its function is as follows. Catalyzes the formation of 6,7-dimethyl-8-ribityllumazine by condensation of 5-amino-6-(D-ribitylamino)uracil with 3,4-dihydroxy-2-butanone 4-phosphate. This is the penultimate step in the biosynthesis of riboflavin. The polypeptide is 6,7-dimethyl-8-ribityllumazine synthase (Campylobacter fetus subsp. fetus (strain 82-40)).